Reading from the N-terminus, the 313-residue chain is D-alanine--D-alanine ligase (313 aa).

In terms of domain architecture, ATP-grasp spans 108-308 (KLVWQQTGVP…YSELVVKVLS (201 aa)). 138 to 193 (VAKLGLPLFVKPASEGSSVAVLKVKTADALPAALEEAATHDKIVIVEKSIEGGGEY) contacts ATP. Positions 262, 275, and 277 each coordinate Mg(2+).

Belongs to the D-alanine--D-alanine ligase family. The cofactor is Mg(2+). Mn(2+) serves as cofactor.

Its subcellular location is the cytoplasm. It catalyses the reaction 2 D-alanine + ATP = D-alanyl-D-alanine + ADP + phosphate + H(+). The protein operates within cell wall biogenesis; peptidoglycan biosynthesis. In terms of biological role, cell wall formation. The sequence is that of D-alanine--D-alanine ligase from Burkholderia cenocepacia (strain ATCC BAA-245 / DSM 16553 / LMG 16656 / NCTC 13227 / J2315 / CF5610) (Burkholderia cepacia (strain J2315)).